A 196-amino-acid polypeptide reads, in one-letter code: Orotate phosphoribosyltransferase (196 aa).

117–125 (EDIVTTGLS) is a binding site for 5-phospho-alpha-D-ribose 1-diphosphate. 2 residues coordinate orotate: Thr-121 and Arg-149.

Belongs to the purine/pyrimidine phosphoribosyltransferase family. PyrE subfamily. As to quaternary structure, homodimer. Mg(2+) serves as cofactor.

The enzyme catalyses orotidine 5'-phosphate + diphosphate = orotate + 5-phospho-alpha-D-ribose 1-diphosphate. It functions in the pathway pyrimidine metabolism; UMP biosynthesis via de novo pathway; UMP from orotate: step 1/2. Catalyzes the transfer of a ribosyl phosphate group from 5-phosphoribose 1-diphosphate to orotate, leading to the formation of orotidine monophosphate (OMP). The chain is Orotate phosphoribosyltransferase from Methylorubrum extorquens (strain PA1) (Methylobacterium extorquens).